A 1193-amino-acid polypeptide reads, in one-letter code: DNA-directed RNA polymerase subunit beta (1193 aa).

Acidic residues predominate over residues 1153–1162 (EMRDLEDDED). The disordered stretch occupies residues 1153–1193 (EMRDLEDDEDAKQNEGLSLPNDEESEELVSADAERDVVTKE). Basic and acidic residues predominate over residues 1184–1193 (DAERDVVTKE).

This sequence belongs to the RNA polymerase beta chain family. As to quaternary structure, the RNAP catalytic core consists of 2 alpha, 1 beta, 1 beta' and 1 omega subunit. When a sigma factor is associated with the core the holoenzyme is formed, which can initiate transcription.

It carries out the reaction RNA(n) + a ribonucleoside 5'-triphosphate = RNA(n+1) + diphosphate. Its function is as follows. DNA-dependent RNA polymerase catalyzes the transcription of DNA into RNA using the four ribonucleoside triphosphates as substrates. The sequence is that of DNA-directed RNA polymerase subunit beta from Bacillus licheniformis (strain ATCC 14580 / DSM 13 / JCM 2505 / CCUG 7422 / NBRC 12200 / NCIMB 9375 / NCTC 10341 / NRRL NRS-1264 / Gibson 46).